The following is a 214-amino-acid chain: uncharacterized protein (214 aa).

A Response regulatory domain is found at 2 to 118 (KIVIADDHHV…ELVKTRQVHG (117 aa)). At Asp53 the chain carries 4-aspartylphosphate. An HTH luxR-type domain is found at 142–207 (EKEKYYQLTR…QAALFAVKYN (66 aa)). Residues 166-185 (NKEIAAALFISEKTVKTHVS) constitute a DNA-binding region (H-T-H motif).

In terms of processing, phosphorylated by YhcY.

It is found in the cytoplasm. Functionally, member of the two-component regulatory system YhcY/YhcZ. This is an uncharacterized protein from Bacillus subtilis (strain 168).